Here is a 205-residue protein sequence, read N- to C-terminus: Transcriptional regulator GfcR (205 aa).

Belongs to the purine/pyrimidine phosphoribosyltransferase family. GfcR subfamily.

In Methanococcus maripaludis (strain DSM 14266 / JCM 13030 / NBRC 101832 / S2 / LL), this protein is Transcriptional regulator GfcR.